We begin with the raw amino-acid sequence, 156 residues long: Small ribosomal subunit protein uS7 (156 aa).

The protein belongs to the universal ribosomal protein uS7 family. In terms of assembly, part of the 30S ribosomal subunit. Contacts proteins S9 and S11.

Its function is as follows. One of the primary rRNA binding proteins, it binds directly to 16S rRNA where it nucleates assembly of the head domain of the 30S subunit. Is located at the subunit interface close to the decoding center, probably blocks exit of the E-site tRNA. The protein is Small ribosomal subunit protein uS7 of Desulfitobacterium hafniense (strain Y51).